The chain runs to 932 residues: ER degradation-enhancing alpha-mannosidase-like protein 3 (932 aa).

Residues 1-41 form the signal peptide; it reads MSEAGGRGCGSPVPQRARWRLVAATAAFCLVSATSVWTAGA. Asn118 carries an N-linked (GlcNAc...) asparagine glycan. Glu146 functions as the Proton donor in the catalytic mechanism. Residue Asn195 is glycosylated (N-linked (GlcNAc...) asparagine). Asp293 is an active-site residue. The Proton donor role is filled by Glu387. The active site involves Glu405. Thr491 is a Ca(2+) binding site. N-linked (GlcNAc...) asparagine glycans are attached at residues Asn504 and Asn511. The region spanning 674–779 is the PA domain; that stretch reads LSKHKETRGF…KEGSIILDAI (106 aa). Residues 790 to 799 are compositionally biased toward basic and acidic residues; it reads SDKAKDRDPE. Residues 790–908 are disordered; the sequence is SDKAKDRDPE…PNVSWGKKVQ (119 aa). Residues Asn810 and Asn814 are each glycosylated (N-linked (GlcNAc...) asparagine). The span at 812–825 shows a compositional bias: low complexity; that stretch reads SQNQSGEQISSSSQ. Residues 856–890 show a composition bias toward polar residues; that stretch reads ASISPSEQTSNPTENHETTNLNGECTDLDNQLQEQ. Residue Asn900 is glycosylated (N-linked (GlcNAc...) asparagine). The Prevents secretion from ER motif lies at 929–932; the sequence is KDEL.

It belongs to the glycosyl hydrolase 47 family. The cofactor is Ca(2+).

It localises to the endoplasmic reticulum lumen. It catalyses the reaction N(4)-(alpha-D-Man-(1-&gt;2)-alpha-D-Man-(1-&gt;2)-alpha-D-Man-(1-&gt;3)-[alpha-D-Man-(1-&gt;2)-alpha-D-Man-(1-&gt;3)-[alpha-D-Man-(1-&gt;2)-alpha-D-Man-(1-&gt;6)]-alpha-D-Man-(1-&gt;6)]-beta-D-Man-(1-&gt;4)-beta-D-GlcNAc-(1-&gt;4)-beta-D-GlcNAc)-L-asparaginyl-[protein] (N-glucan mannose isomer 9A1,2,3B1,2,3) + 4 H2O = N(4)-(alpha-D-Man-(1-&gt;3)-[alpha-D-Man-(1-&gt;3)-[alpha-D-Man-(1-&gt;6)]-alpha-D-Man-(1-&gt;6)]-beta-D-Man-(1-&gt;4)-beta-D-GlcNAc-(1-&gt;4)-beta-D-GlcNAc)-L-asparaginyl-[protein] (N-glucan mannose isomer 5A1,2) + 4 beta-D-mannose. It carries out the reaction N(4)-(alpha-D-Man-(1-&gt;2)-alpha-D-Man-(1-&gt;2)-alpha-D-Man-(1-&gt;3)-[alpha-D-Man-(1-&gt;3)-[alpha-D-Man-(1-&gt;2)-alpha-D-Man-(1-&gt;6)]-alpha-D-Man-(1-&gt;6)]-beta-D-Man-(1-&gt;4)-beta-D-GlcNAc-(1-&gt;4)-beta-D-GlcNAc)-L-asparaginyl-[protein] (N-glucan mannose isomer 8A1,2,3B1,3) + 3 H2O = N(4)-(alpha-D-Man-(1-&gt;3)-[alpha-D-Man-(1-&gt;3)-[alpha-D-Man-(1-&gt;6)]-alpha-D-Man-(1-&gt;6)]-beta-D-Man-(1-&gt;4)-beta-D-GlcNAc-(1-&gt;4)-beta-D-GlcNAc)-L-asparaginyl-[protein] (N-glucan mannose isomer 5A1,2) + 3 beta-D-mannose. Its pathway is protein modification; protein glycosylation. In terms of biological role, involved in endoplasmic reticulum-associated degradation (ERAD). Accelerates the glycoprotein ERAD by proteasomes, by catalyzing mannose trimming from Man8GlcNAc2 to Man7GlcNAc2 in the N-glycans. May also participate in mannose trimming from all glycoproteins and not just misfolded ones targeted to ERAD. May have alpha 1,2-mannosidase activity. The chain is ER degradation-enhancing alpha-mannosidase-like protein 3 (EDEM3) from Homo sapiens (Human).